The following is a 339-amino-acid chain: MLSSALYQQAGLSGLLRASAMGPQTPFIASPKETQADPMAFVKDLLAGGTAGAISKTAVAPIERVKLLLQTQDSNPMIKSGQVPRYTGIVNCFVRVSSEQGVASFWRGNLANVVRYFPTQAFNFAFKDTIKGLFPKYSPKTDFWRFFVVNLASGGLAGAGSLLIVYPLDFARTRLAADVGSGKSREFTGLVDCLSKVVKRGGPMALYQGFGVSVQGIIVYRGAYFGLYDTAKGVLFKDERTANFFAKWAVAQAVTAGAGVLSYPFDTVRRRLMMQSGGERQYNGTIDCWRKVAQQEGMKAFFKGAWSNVLRGAGGAFVLVLYDEIKKFINPNAVSSASE.

Solcar repeat units lie at residues 39 to 133 (MAFV…IKGL), 145 to 234 (RFFV…AKGV), and 246 to 328 (AKWA…IKKF). A run of 5 helical transmembrane segments spans residues 41–70 (FVKD…LLLQ), 110–134 (LANV…KGLF), 144–164 (WRFF…SLLI), 212–232 (VSVQ…DTAK), and 245–265 (FAKW…SYPF). ADP-binding residues include arginine 115 and lysine 127. An ADP-binding site is contributed by arginine 269. The important for transport activity stretch occupies residues 269–274 (RRRLMM). The Nucleotide carrier signature motif motif lies at 269-274 (RRRLMM). Residues 305–322 (AWSNVLRGAGGAFVLVLY) form a helical membrane-spanning segment.

This sequence belongs to the mitochondrial carrier (TC 2.A.29) family. Monomer.

The protein localises to the mitochondrion inner membrane. The catalysed reaction is ADP(in) + ATP(out) = ADP(out) + ATP(in). The matrix-open state (m-state) is inhibited by the membrane-permeable bongkrekic acid (BKA). The cytoplasmic-open state (c-state) is inhibited by the membrane-impermeable toxic inhibitor carboxyatractyloside (CATR). ADP:ATP antiporter that mediates import of ADP into the mitochondrial matrix for ATP synthesis, and export of ATP out to fuel the cell. Cycles between the cytoplasmic-open state (c-state) and the matrix-open state (m-state): operates by the alternating access mechanism with a single substrate-binding site intermittently exposed to either the cytosolic (c-state) or matrix (m-state) side of the inner mitochondrial membrane. This chain is ADP,ATP carrier protein, found in Parachlorella kessleri (Green alga).